We begin with the raw amino-acid sequence, 266 residues long: Expansin-A13 (266 aa).

The first 19 residues, 1 to 19, serve as a signal peptide directing secretion; it reads MQRFLLPLLFLALSPPAIC. The Expansin-like EG45 domain occupies 58-171; the sequence is GGACGYGDLV…RRINCRKEGS (114 aa). Residues 181–260 form the Expansin-like CBD domain; sequence IFISVLITNV…NWNYGQTFEG (80 aa).

This sequence belongs to the expansin family. Expansin A subfamily.

The protein localises to the secreted. The protein resides in the cell wall. Its subcellular location is the membrane. Its function is as follows. Causes loosening and extension of plant cell walls by disrupting non-covalent bonding between cellulose microfibrils and matrix glucans. No enzymatic activity has been found. This Arabidopsis thaliana (Mouse-ear cress) protein is Expansin-A13 (EXPA13).